The chain runs to 434 residues: Trigger factor (434 aa).

The 86-residue stretch at 161 to 246 (EDRATLDFTG…LKKVEVRELP (86 aa)) folds into the PPIase FKBP-type domain.

This sequence belongs to the FKBP-type PPIase family. Tig subfamily.

It is found in the cytoplasm. The catalysed reaction is [protein]-peptidylproline (omega=180) = [protein]-peptidylproline (omega=0). Functionally, involved in protein export. Acts as a chaperone by maintaining the newly synthesized protein in an open conformation. Functions as a peptidyl-prolyl cis-trans isomerase. This chain is Trigger factor, found in Yersinia enterocolitica serotype O:8 / biotype 1B (strain NCTC 13174 / 8081).